Consider the following 596-residue polypeptide: Phosphomethylpyrimidine synthase 1 (596 aa).

Substrate-binding positions include Asn-228, Met-257, Tyr-286, His-322, 342-344, 383-386, and Glu-422; these read SRG and DGLR. His-426 provides a ligand contact to Zn(2+). Tyr-449 contacts substrate. His-490 lines the Zn(2+) pocket. Residues Cys-570, Cys-573, and Cys-578 each coordinate [4Fe-4S] cluster.

It belongs to the ThiC family. In terms of assembly, homodimer. It depends on [4Fe-4S] cluster as a cofactor.

It carries out the reaction 5-amino-1-(5-phospho-beta-D-ribosyl)imidazole + S-adenosyl-L-methionine = 4-amino-2-methyl-5-(phosphooxymethyl)pyrimidine + CO + 5'-deoxyadenosine + formate + L-methionine + 3 H(+). It functions in the pathway cofactor biosynthesis; thiamine diphosphate biosynthesis. In terms of biological role, catalyzes the synthesis of the hydroxymethylpyrimidine phosphate (HMP-P) moiety of thiamine from aminoimidazole ribotide (AIR) in a radical S-adenosyl-L-methionine (SAM)-dependent reaction. In Syntrophotalea carbinolica (strain DSM 2380 / NBRC 103641 / GraBd1) (Pelobacter carbinolicus), this protein is Phosphomethylpyrimidine synthase 1.